The sequence spans 183 residues: Segregation and condensation protein B (183 aa).

Belongs to the ScpB family. As to quaternary structure, homodimer. Homodimerization may be required to stabilize the binding of ScpA to the Smc head domains. Component of a cohesin-like complex composed of ScpA, ScpB and the Smc homodimer, in which ScpA and ScpB bind to the head domain of Smc. The presence of the three proteins is required for the association of the complex with DNA.

The protein localises to the cytoplasm. Its function is as follows. Participates in chromosomal partition during cell division. May act via the formation of a condensin-like complex containing Smc and ScpA that pull DNA away from mid-cell into both cell halves. The sequence is that of Segregation and condensation protein B from Streptococcus pyogenes serotype M12 (strain MGAS2096).